A 78-amino-acid polypeptide reads, in one-letter code: Defensin-like protein 281 (78 aa).

The signal sequence occupies residues Met-1–Gly-23. 3 disulfide bridges follow: Cys-37/Cys-60, Cys-46/Cys-72, and Cys-50/Cys-74.

It belongs to the DEFL family.

The protein localises to the secreted. In Arabidopsis thaliana (Mouse-ear cress), this protein is Defensin-like protein 281.